The chain runs to 251 residues: Cold shock-induced protein TIR2 (251 aa).

A signal peptide spans 1–18 (MAYIKIALLAAIAALASA). One copy of the PIR1/2/3 repeat lies at 207 to 225 (ASAISQISDGQVQATSTVS). Glycine 231 carries GPI-anchor amidated glycine lipidation. Positions 232–251 (AAKAVIGMGAGVMAAAAMLL) are cleaved as a propeptide — removed in mature form.

Belongs to the SRP1/TIP1 family. Post-translationally, the GPI-anchor is attached to the protein in the endoplasmic reticulum and serves to target the protein to the cell surface. There, the glucosamine-inositol phospholipid moiety is cleaved off and the GPI-modified mannoprotein is covalently attached via its lipidless GPI glycan remnant to the 1,6-beta-glucan of the outer cell wall layer. Covalently linked to beta-1,3-glucan of the inner cell wall layer via an alkali-sensitive ester linkage between the gamma-carboxyl group of glutamic acids, arising from a specific glutamine within the PIR1/2/3 repeat, and hydroxyl groups of glucoses of beta-1,3-glucan chains.

The protein resides in the secreted. Its subcellular location is the cell wall. It is found in the membrane. Its function is as follows. Component of the cell wall. This Saccharomyces cerevisiae (strain ATCC 204508 / S288c) (Baker's yeast) protein is Cold shock-induced protein TIR2 (TIR2).